Reading from the N-terminus, the 82-residue chain is Immediate early response 3-interacting protein 1 (82 aa).

A run of 2 helical transmembrane segments spans residues 2–22 and 62–82; these read AFTL…IAVL and VMRV…LLFG.

Belongs to the YOS1 family.

Its subcellular location is the endoplasmic reticulum membrane. In terms of biological role, regulator of endoplasmic reticulum secretion that acts as a key determinant of brain size. Required for secretion of extracellular matrix proteins. Required for correct brain development by depositing sufficient extracellular matrix proteins for tissue integrity and the proliferation of neural progenitors. Acts as a regulator of the unfolded protein response (UPR). This is Immediate early response 3-interacting protein 1 from Bos taurus (Bovine).